A 468-amino-acid polypeptide reads, in one-letter code: Adenylyltransferase and sulfurtransferase MOCS3-1 (468 aa).

ATP contacts are provided by residues Gly111, Asp132, 139-143 (NNLHR), Lys156, and 200-201 (DN). Zn(2+) is bound by residues Cys241 and Cys244. The Glycyl thioester intermediate; for adenylyltransferase activity role is filled by Cys258. The Zn(2+) site is built by Cys316 and Cys319. In terms of domain architecture, Rhodanese spans 371-466 (DGEPHLLLDV…WGRDVDPDFP (96 aa)). Cys426 (cysteine persulfide intermediate; for sulfurtransferase activity) is an active-site residue.

In the N-terminal section; belongs to the HesA/MoeB/ThiF family. UBA4 subfamily. It depends on Zn(2+) as a cofactor.

Its subcellular location is the cytoplasm. The enzyme catalyses [molybdopterin-synthase sulfur-carrier protein]-C-terminal Gly-Gly + ATP + H(+) = [molybdopterin-synthase sulfur-carrier protein]-C-terminal Gly-Gly-AMP + diphosphate. The catalysed reaction is [molybdopterin-synthase sulfur-carrier protein]-C-terminal Gly-Gly-AMP + S-sulfanyl-L-cysteinyl-[cysteine desulfurase] + AH2 = [molybdopterin-synthase sulfur-carrier protein]-C-terminal-Gly-aminoethanethioate + L-cysteinyl-[cysteine desulfurase] + A + AMP + 2 H(+). The protein operates within tRNA modification; 5-methoxycarbonylmethyl-2-thiouridine-tRNA biosynthesis. Its pathway is cofactor biosynthesis; molybdopterin biosynthesis. Plays a central role in 2-thiolation of mcm(5)S(2)U at tRNA wobble positions of cytosolic tRNA(Lys), tRNA(Glu) and tRNA(Gln). Also essential during biosynthesis of the molybdenum cofactor. Acts by mediating the C-terminal thiocarboxylation of sulfur carriers URM1 and MOCS2A. Its N-terminus first activates URM1 and MOCS2A as acyl-adenylates (-COAMP), then the persulfide sulfur on the catalytic cysteine is transferred to URM1 and MOCS2A to form thiocarboxylation (-COSH) of their C-terminus. The reaction probably involves hydrogen sulfide that is generated from the persulfide intermediate and that acts as a nucleophile towards URM1 and MOCS2A. Subsequently, a transient disulfide bond is formed. Does not use thiosulfate as sulfur donor; NFS1 probably acting as a sulfur donor for thiocarboxylation reactions. This Zea mays (Maize) protein is Adenylyltransferase and sulfurtransferase MOCS3-1.